Consider the following 414-residue polypeptide: Schlafen-like protein 1 (414 aa).

The tract at residues 141-203 is disordered; the sequence is LHHREQDDSG…ISQNRPSGVR (63 aa). The span at 154–185 shows a compositional bias: pro residues; it reads SHSPGPSPGPSPGPSPGFRRPPLPQLADPPPN. Position 268–275 (268–275) interacts with ATP; the sequence is GVEDSGLV. The stretch at 373–407 forms a coiled coil; the sequence is RQKWTAELSKLEEKVDVLTLEKEQLQEQLRQRQTL.

Belongs to the Schlafen family. Subgroup I subfamily.

In Rattus norvegicus (Rat), this protein is Schlafen-like protein 1 (Slfnl1).